The chain runs to 389 residues: Cytochrome B translational activator CBS2 (389 aa).

Its subcellular location is the mitochondrion. Functionally, translational activator of cytochrome b. The cytochrome b (coB) leader RNA may represent the target sequence for CBS1 and/ or CBS2. The polypeptide is Cytochrome B translational activator CBS2 (CBS2) (Saccharomyces cerevisiae (strain ATCC 204508 / S288c) (Baker's yeast)).